We begin with the raw amino-acid sequence, 234 residues long: Synaptogyrin-1 (234 aa).

Met-1 carries the N-acetylmethionine modification. Residues 1–23 (MEGGAYGAGKAGGAFDPYTLVRQ) lie on the Cytoplasmic side of the membrane. The region spanning 20–173 (LVRQPHTILR…QAVLAFQRYQ (154 aa)) is the MARVEL domain. A helical membrane pass occupies residues 24–44 (PHTILRVVSWVFSIVVFGSIV). The Lumenal portion of the chain corresponds to 45 to 71 (NEGYLNNPEEEEEFCIYNRNPNACSYG). The helical transmembrane segment at 72–92 (VTVGVLAFLTCLVYLALDVYF) threads the bilayer. Residues 93-104 (PQISSVKDRKKA) are Cytoplasmic-facing. A helical transmembrane segment spans residues 105–125 (VLSDIGVSAFWAFFWFVGFCF). The Lumenal portion of the chain corresponds to 126 to 148 (LANQWQVSKPKDNPLNEGTDAAR). Residues 149–169 (AAIAFSFFSIFTWAGQAVLAF) traverse the membrane as a helical segment. At 170 to 234 (QRYQIGADSA…EPQGYQSQGY (65 aa)) the chain is on the cytoplasmic side. Positions 201–234 (EPSAGSDPTGMGGTYQHPANAFDAEPQGYQSQGY) are disordered.

The protein belongs to the synaptogyrin family. In terms of tissue distribution, nervous system (at protein level).

The protein localises to the cytoplasmic vesicle. Its subcellular location is the secretory vesicle. It localises to the synaptic vesicle membrane. It is found in the melanosome. In terms of biological role, may play a role in regulated exocytosis. Modulates the localization of synaptophysin/SYP into synaptic-like microvesicles and may therefore play a role in synaptic-like microvesicle formation and/or maturation. Involved in the regulation of short-term and long-term synaptic plasticity. The polypeptide is Synaptogyrin-1 (Rattus norvegicus (Rat)).